The sequence spans 238 residues: Pyridoxine 5'-phosphate synthase (238 aa).

Asn7 is a binding site for 3-amino-2-oxopropyl phosphate. 9–10 (DH) is a 1-deoxy-D-xylulose 5-phosphate binding site. Arg18 provides a ligand contact to 3-amino-2-oxopropyl phosphate. His43 (proton acceptor) is an active-site residue. Residues Arg45 and His50 each contribute to the 1-deoxy-D-xylulose 5-phosphate site. Residue Glu70 is the Proton acceptor of the active site. Position 100 (Thr100) interacts with 1-deoxy-D-xylulose 5-phosphate. Catalysis depends on His190, which acts as the Proton donor. 3-amino-2-oxopropyl phosphate is bound by residues Gly191 and 212–213 (GH).

The protein belongs to the PNP synthase family. As to quaternary structure, homooctamer; tetramer of dimers.

Its subcellular location is the cytoplasm. The catalysed reaction is 3-amino-2-oxopropyl phosphate + 1-deoxy-D-xylulose 5-phosphate = pyridoxine 5'-phosphate + phosphate + 2 H2O + H(+). It functions in the pathway cofactor biosynthesis; pyridoxine 5'-phosphate biosynthesis; pyridoxine 5'-phosphate from D-erythrose 4-phosphate: step 5/5. Its function is as follows. Catalyzes the complicated ring closure reaction between the two acyclic compounds 1-deoxy-D-xylulose-5-phosphate (DXP) and 3-amino-2-oxopropyl phosphate (1-amino-acetone-3-phosphate or AAP) to form pyridoxine 5'-phosphate (PNP) and inorganic phosphate. The polypeptide is Pyridoxine 5'-phosphate synthase (Prochlorococcus marinus (strain MIT 9515)).